The chain runs to 147 residues: Hemoglobin subunit delta (147 aa).

Positions 3–147 constitute a Globin domain; sequence HLTADEKAAV…VAAALAHKYH (145 aa). His64 and His93 together coordinate heme b.

This sequence belongs to the globin family. As to quaternary structure, heterotetramer of two delta chains and two alpha chains. As to expression, red blood cells.

This Carlito syrichta (Philippine tarsier) protein is Hemoglobin subunit delta (HBD).